A 341-amino-acid polypeptide reads, in one-letter code: MVGEMETKEKPKPTPDYLMQLMNDKKLMSSLPNFCGIFTHLERLLDEEISRVRKDMYNDTMNSSSNEKRTSELPDGIGPIVQLQEKLYVPVKEYPDFNFVGRILGPRGLTAKQLEAETGCKIMVRGKGSMRDKKKEEQNRGKPNWEHLNEDLHVLITVEDAQNRAELKLKRAVEEVKKLLVPAAEGEDSLKKMQLMELAILNGTYRDANLKSPALAFSLAATGQAPRIITGPAPVLSPAALRTPTPAGHTLMPLIRQIQTAVMPNGTPHPTATLMQQAPEGGLIYTPYEYPYTLAPATSILEYPIEASGVLGAVATKVRRHDMRVHPYQRIVTADRAATGN.

The region spanning Y88–V154 is the KH domain. The Nuclear localization signal signature appears at R324–R330.

The protein belongs to the quaking family. As to quaternary structure, homodimer; does not require RNA to homodimerize.

It localises to the nucleus. It is found in the cytoplasm. Its function is as follows. RNA reader protein, which recognizes and binds specific RNAs, thereby regulating RNA metabolic processes, such as pre-mRNA splicing, circular RNA (circRNA) formation, mRNA export, mRNA stability and/or translation. Involved in various cellular processes, such as mRNA storage into stress granules, apoptosis, interferon response, glial cell fate and development. Binds to the 5'-NACUAAY-N(1,20)-UAAY-3' RNA core sequence. Acts as a mRNA modification reader that specifically recognizes and binds mRNA transcripts modified by internal N(7)-methylguanine (m7G). Promotes the formation of circular RNAs (circRNAs): acts by binding to sites flanking circRNA-forming exons. CircRNAs are produced by back-splicing circularization of pre-mRNAs. Required to protect and promote stability of mRNAs which promotes oligodendrocyte differentiation. Acts as an important regulator of muscle development. Essential for notochord development. The chain is KH domain-containing RNA-binding protein qki.S from Xenopus laevis (African clawed frog).